The following is a 279-amino-acid chain: Non-structural protein 2 (279 aa).

ATP contacts are provided by residues aspartate 119–leucine 121, lysine 201, and histidine 229–histidine 231. The interval methionine 214–serine 249 is RNA-binding. The For NTPase and RTPase activities role is filled by histidine 233. Residue arginine 235 coordinates ATP.

This sequence belongs to the rotavirus NSP2 family. Homooctamer. Interacts with VP1; this interaction is weak. Interacts with NSP5; this interaction leads to up-regulation of NSP5 phosphorylation and formation of viral factories. Mg(2+) serves as cofactor.

The protein resides in the host cytoplasm. Participates in replication and packaging of the viral genome. Plays a crucial role, together with NSP5, in the formation of virus factories (viroplasms) which are large inclusions in the host cytoplasm where replication intermediates are assembled and viral RNA replication takes place. Displays ssRNA binding, NTPase, RNA triphosphatase (RTPase) and ATP-independent helix-unwinding activities. The unwinding activity may prepare and organize plus-strand RNAs for packaging and replication by removing interfering secondary structures. The RTPase activity plays a role in the removal of the gamma-phosphate from the rotavirus RNA minus strands of dsRNA genome segments. This chain is Non-structural protein 2, found in Homo sapiens (Human).